A 590-amino-acid chain; its full sequence is Auxin response factor 20 (590 aa).

A DNA-binding region (TF-B3) is located at residues 126–224; that stretch reads FTKVLTASDT…ELRVGIRRAR (99 aa). In terms of domain architecture, PB1 spans 495–576; the sequence is RTCTKVQMQG…MVKKILIYSK (82 aa).

It belongs to the ARF family. As to quaternary structure, homodimers and heterodimers.

The protein localises to the nucleus. In terms of biological role, auxin response factors (ARFs) are transcriptional factors that bind specifically to the DNA sequence 5'-TGTCTC-3' found in the auxin-responsive promoter elements (AuxREs). Could act as transcriptional activator or repressor. Formation of heterodimers with Aux/IAA proteins may alter their ability to modulate early auxin response genes expression. The polypeptide is Auxin response factor 20 (ARF20) (Arabidopsis thaliana (Mouse-ear cress)).